A 419-amino-acid chain; its full sequence is Hyaluronan synthase (419 aa).

5 helical membrane passes run 8–28 (LIVL…MYLF), 33–53 (VGIY…LSFL), 318–338 (IVAL…VAIG), 345–365 (AIQL…IVAL), and 376–396 (PASF…LQPL).

It belongs to the NodC/HAS family. Requires Mg(2+) as cofactor.

The protein localises to the cell membrane. The enzyme catalyses [hyaluronan](n) + UDP-N-acetyl-alpha-D-glucosamine = N-acetyl-beta-D-glucosaminyl-(1-&gt;4)-[hyaluronan](n) + UDP + H(+). It catalyses the reaction N-acetyl-beta-D-glucosaminyl-(1-&gt;4)-[hyaluronan](n) + UDP-alpha-D-glucuronate = [hyaluronan](n+1) + UDP + H(+). Its pathway is glycan biosynthesis; hyaluronan biosynthesis. Glycosaminoglycan synthesis. The hyaluronic acid capsule is involved in the pathogenicity of group A Streptococci; it may be the major virulence determinant. This is Hyaluronan synthase (hasA) from Streptococcus pyogenes serotype M6 (strain ATCC BAA-946 / MGAS10394).